We begin with the raw amino-acid sequence, 139 residues long: FAD synthase (139 aa).

ATP contacts are provided by residues 8–9 (VF), 13–16 (HPGH), Asp92, and Tyr119.

Belongs to the archaeal FAD synthase family. As to quaternary structure, homodimer. The cofactor is a divalent metal cation.

The catalysed reaction is FMN + ATP + H(+) = FAD + diphosphate. Its pathway is cofactor biosynthesis; FAD biosynthesis; FAD from FMN: step 1/1. Functionally, catalyzes the transfer of the AMP portion of ATP to flavin mononucleotide (FMN) to produce flavin adenine dinucleotide (FAD) coenzyme. This is FAD synthase from Picrophilus torridus (strain ATCC 700027 / DSM 9790 / JCM 10055 / NBRC 100828 / KAW 2/3).